A 457-amino-acid polypeptide reads, in one-letter code: ATP synthase subunit beta (457 aa).

An ATP-binding site is contributed by 147 to 154 (GGAGVGKT).

The protein belongs to the ATPase alpha/beta chains family. F-type ATPases have 2 components, CF(1) - the catalytic core - and CF(0) - the membrane proton channel. CF(1) has five subunits: alpha(3), beta(3), gamma(1), delta(1), epsilon(1). CF(0) has three main subunits: a(1), b(2) and c(9-12). The alpha and beta chains form an alternating ring which encloses part of the gamma chain. CF(1) is attached to CF(0) by a central stalk formed by the gamma and epsilon chains, while a peripheral stalk is formed by the delta and b chains.

The protein localises to the cell inner membrane. The enzyme catalyses ATP + H2O + 4 H(+)(in) = ADP + phosphate + 5 H(+)(out). Its function is as follows. Produces ATP from ADP in the presence of a proton gradient across the membrane. The catalytic sites are hosted primarily by the beta subunits. The protein is ATP synthase subunit beta of Haemophilus influenzae (strain PittEE).